The chain runs to 453 residues: ATP-dependent protease ATPase subunit HslU (453 aa).

ATP contacts are provided by residues Ile18, 60-65, Asp266, Glu331, and Arg403; that span reads GVGKTE.

The protein belongs to the ClpX chaperone family. HslU subfamily. As to quaternary structure, a double ring-shaped homohexamer of HslV is capped on each side by a ring-shaped HslU homohexamer. The assembly of the HslU/HslV complex is dependent on binding of ATP.

Its subcellular location is the cytoplasm. In terms of biological role, ATPase subunit of a proteasome-like degradation complex; this subunit has chaperone activity. The binding of ATP and its subsequent hydrolysis by HslU are essential for unfolding of protein substrates subsequently hydrolyzed by HslV. HslU recognizes the N-terminal part of its protein substrates and unfolds these before they are guided to HslV for hydrolysis. The polypeptide is ATP-dependent protease ATPase subunit HslU (Desulforapulum autotrophicum (strain ATCC 43914 / DSM 3382 / VKM B-1955 / HRM2) (Desulfobacterium autotrophicum)).